A 123-amino-acid polypeptide reads, in one-letter code: UPF0102 protein VSAL_I2655 (123 aa).

It belongs to the UPF0102 family.

The polypeptide is UPF0102 protein VSAL_I2655 (Aliivibrio salmonicida (strain LFI1238) (Vibrio salmonicida (strain LFI1238))).